Consider the following 419-residue polypeptide: Serine hydroxymethyltransferase (419 aa).

Residues leucine 118 and 122 to 124 (GHL) contribute to the (6S)-5,6,7,8-tetrahydrofolate site. Lysine 227 carries the N6-(pyridoxal phosphate)lysine modification.

This sequence belongs to the SHMT family. As to quaternary structure, homodimer. Pyridoxal 5'-phosphate serves as cofactor.

Its subcellular location is the cytoplasm. The catalysed reaction is (6R)-5,10-methylene-5,6,7,8-tetrahydrofolate + glycine + H2O = (6S)-5,6,7,8-tetrahydrofolate + L-serine. The protein operates within one-carbon metabolism; tetrahydrofolate interconversion. Its pathway is amino-acid biosynthesis; glycine biosynthesis; glycine from L-serine: step 1/1. Functionally, catalyzes the reversible interconversion of serine and glycine with tetrahydrofolate (THF) serving as the one-carbon carrier. This reaction serves as the major source of one-carbon groups required for the biosynthesis of purines, thymidylate, methionine, and other important biomolecules. Also exhibits THF-independent aldolase activity toward beta-hydroxyamino acids, producing glycine and aldehydes, via a retro-aldol mechanism. The protein is Serine hydroxymethyltransferase of Chloroflexus aurantiacus (strain ATCC 29364 / DSM 637 / Y-400-fl).